A 147-amino-acid chain; its full sequence is 3-dehydroquinate dehydratase (147 aa).

Residue Tyr-23 is the Proton acceptor of the active site. Substrate contacts are provided by Asn-74, His-80, and Asp-87. The active-site Proton donor is His-100. Substrate contacts are provided by residues 101–102 (LS) and Arg-111.

It belongs to the type-II 3-dehydroquinase family. As to quaternary structure, homododecamer.

The enzyme catalyses 3-dehydroquinate = 3-dehydroshikimate + H2O. The protein operates within metabolic intermediate biosynthesis; chorismate biosynthesis; chorismate from D-erythrose 4-phosphate and phosphoenolpyruvate: step 3/7. Its function is as follows. Catalyzes a trans-dehydration via an enolate intermediate. The polypeptide is 3-dehydroquinate dehydratase (Clostridium botulinum (strain ATCC 19397 / Type A)).